Reading from the N-terminus, the 286-residue chain is ATP synthase gamma chain (286 aa).

It belongs to the ATPase gamma chain family. As to quaternary structure, F-type ATPases have 2 components, CF(1) - the catalytic core - and CF(0) - the membrane proton channel. CF(1) has five subunits: alpha(3), beta(3), gamma(1), delta(1), epsilon(1). CF(0) has three main subunits: a, b and c.

It localises to the cell inner membrane. Produces ATP from ADP in the presence of a proton gradient across the membrane. The gamma chain is believed to be important in regulating ATPase activity and the flow of protons through the CF(0) complex. The sequence is that of ATP synthase gamma chain from Pseudomonas fluorescens (strain Pf0-1).